Reading from the N-terminus, the 191-residue chain is Programmed cell death protein 6 (191 aa).

Ala2 carries the post-translational modification N-acetylalanine. EF-hand domains are found at residues 23–58 (PDQS…GTWT), 59–89 (PFNP…TGVW), 90–125 (KYIT…FGYR), 126–161 (LSDQ…LQRL), and 162–191 (TDIF…FSIV). Ca(2+) is bound by residues Asp36, Asp38, Ser40, Val42, and Glu47. Asp103, Asp105, Ser107, Met109, and Glu114 together coordinate Ca(2+). 4 residues coordinate Mg(2+): Asp169, Asp171, Asp173, and Trp175.

Homodimer and heterodimer; heterodimerizes (via the EF-hand 5) with PEF1. Isoform 1 and isoform 2 self-associate; probably forming homodimers. Interacts with CPNE4 (via VWFA domain). Interacts with PDCD6IP; the interaction is calcium-dependent. Interacts with RBM22. Interacts with PLSCR4. Interacts with ANXA7 and TSG101. Interacts with DAPK1. Interacts with SEC31A; the interaction is calcium-dependent and promotes monoubiquitination of SEC31A. Interacts with ANXA11 (via N-terminus); the interaction is calcium-dependent. Interacts with PLSCR3 (via N-terminus); the interaction is calcium-dependent. Interacts with MCOLN1; the interaction is calcium-dependent. Interacts with KDR; the interaction is calcium-dependent. Interacts with HEBP2; the interaction is calcium-dependent. Interacts with TFG. Isoform 1: Interacts with SHISA5, leading to stabilize it. Isoform 2: Does not interact with SHISA5. Isoform 2: Does not interact with PDCD6IP, TSG101, ANXA7 and ANXA11.

It localises to the endoplasmic reticulum membrane. Its subcellular location is the cytoplasmic vesicle. The protein localises to the COPII-coated vesicle membrane. It is found in the cytoplasm. The protein resides in the nucleus. It localises to the endosome. Its function is as follows. Calcium sensor that plays a key role in processes such as endoplasmic reticulum (ER)-Golgi vesicular transport, endosomal biogenesis or membrane repair. Acts as an adapter that bridges unrelated proteins or stabilizes weak protein-protein complexes in response to calcium: calcium-binding triggers exposure of apolar surface, promoting interaction with different sets of proteins thanks to 3 different hydrophobic pockets, leading to translocation to membranes. Involved in ER-Golgi transport. Regulates ER-Golgi transport by promoting the association between PDCD6IP and TSG101, thereby bridging together the ESCRT-III and ESCRT-I complexes. Together with PEF1, acts as a calcium-dependent adapter for the BCR(KLHL12) complex, a complex involved in ER-Golgi transport by regulating the size of COPII coats. In response to cytosolic calcium increase, the heterodimer formed with PEF1 interacts with, and bridges together the BCR(KLHL12) complex and SEC31 (SEC31A or SEC31B), promoting monoubiquitination of SEC31 and subsequent collagen export, which is required for neural crest specification. Involved in the regulation of the distribution and function of MCOLN1 in the endosomal pathway. Promotes localization and polymerization of TFG at endoplasmic reticulum exit site. Required for T-cell receptor-, Fas-, and glucocorticoid-induced apoptosis. May mediate Ca(2+)-regulated signals along the death pathway: interaction with DAPK1 can accelerate apoptotic cell death by increasing caspase-3 activity. Its role in apoptosis may however be indirect, as suggested by knockout experiments. May inhibit KDR/VEGFR2-dependent angiogenesis; the function involves inhibition of VEGF-induced phosphorylation of the Akt signaling pathway. Has a lower Ca(2+) affinity than isoform 1. The chain is Programmed cell death protein 6 from Rattus norvegicus (Rat).